The primary structure comprises 462 residues: Bifunctional protein HldE (462 aa).

The ribokinase stretch occupies residues 1–309 (MKPRILVLGD…EYERSIRKAP (309 aa)). 186–189 (NKKE) contributes to the ATP binding site. The active site involves D254. Positions 336–462 (FTNGCFDILH…TAIVERMRSC (127 aa)) are cytidylyltransferase.

This sequence in the N-terminal section; belongs to the carbohydrate kinase PfkB family. It in the C-terminal section; belongs to the cytidylyltransferase family. Homodimer.

The catalysed reaction is D-glycero-beta-D-manno-heptose 7-phosphate + ATP = D-glycero-beta-D-manno-heptose 1,7-bisphosphate + ADP + H(+). It catalyses the reaction D-glycero-beta-D-manno-heptose 1-phosphate + ATP + H(+) = ADP-D-glycero-beta-D-manno-heptose + diphosphate. Its pathway is nucleotide-sugar biosynthesis; ADP-L-glycero-beta-D-manno-heptose biosynthesis; ADP-L-glycero-beta-D-manno-heptose from D-glycero-beta-D-manno-heptose 7-phosphate: step 1/4. It functions in the pathway nucleotide-sugar biosynthesis; ADP-L-glycero-beta-D-manno-heptose biosynthesis; ADP-L-glycero-beta-D-manno-heptose from D-glycero-beta-D-manno-heptose 7-phosphate: step 3/4. In terms of biological role, catalyzes the phosphorylation of D-glycero-D-manno-heptose 7-phosphate at the C-1 position to selectively form D-glycero-beta-D-manno-heptose-1,7-bisphosphate. Functionally, catalyzes the ADP transfer from ATP to D-glycero-beta-D-manno-heptose 1-phosphate, yielding ADP-D-glycero-beta-D-manno-heptose. This Nitratiruptor sp. (strain SB155-2) protein is Bifunctional protein HldE.